A 1227-amino-acid chain; its full sequence is Anion exchange protein 3 (1227 aa).

Residues 1–11 show a composition bias toward pro residues; it reads MANGVIPPPGG. Disordered regions lie at residues 1 to 256, 286 to 312, and 428 to 497; these read MANG…DEAE, KPSRIQGGRGSPSGLAPILRRKKKKKK, and NDDK…GDGH. At 1-707 the chain is on the cytoplasmic side; that stretch reads MANGVIPPPG…DLRDALHSQC (707 aa). Residues 58-75 show a composition bias toward basic and acidic residues; sequence DPEKPSRSYSERDFEFHR. Basic residues-rich tracts occupy residues 76-97 and 104-113; these read HTSHHTHHPLSARLPPPHKLRR and RHTRRKRKKE. The segment covering 134 to 152 has biased composition (acidic residues); the sequence is AEEEEEEEEEEEGESEAEP. Residues serine 167, serine 170, serine 175, and serine 198 each carry the phosphoserine modification. Positions 194–215 are enriched in low complexity; the sequence is QSDQSPQRSGSSPSPRARASRI. An Omega-N-methylarginine modification is found at arginine 294. The segment covering 435-448 has biased composition (low complexity); the sequence is FFPRNPSSSSVNSV. Residues 480–497 are compositionally biased toward basic and acidic residues; the sequence is HDPDAKEKPLHMPGGDGH. The next 4 helical transmembrane spans lie at 708–730, 736–773, 793–815, and 825–846; these read VAAVLFIYFAALSPAITFGGLLG, LMGVSELIVSTAVLGVLFSLLGAQPLLVVGFSGPLLVF, VWVGLWLVVFVLALVAAEGSFLV, and IFAFLISLIFIYETFHKLYKVF. The segment at 708 to 1227 is membrane (anion exchange); sequence VAAVLFIYFA…DEYNELHMPV (520 aa). N-linked (GlcNAc...) asparagine glycosylation occurs at asparagine 868. A helical transmembrane segment spans residues 888–905; sequence ALLSLILMLGTFLIAFFL. Over 906-920 the chain is Cytoplasmic; sequence RKFRNSRFLGGKARR. The next 5 membrane-spanning stretches (helical) occupy residues 921 to 941, 975 to 997, 1023 to 1044, 1078 to 1123, and 1150 to 1186; these read IIGDFGIPISILVMVLVDYSI, PFPPWMMVAAAVPALLVLILIFM, LLLIGSLGGLCGLFGLPWLTAA, VTGV…IQLS, and MHLFTCIQLGCIALLWVVKSTAASLAFPFLLLLTVPL. Cysteine 1160 carries the S-palmitoyl cysteine lipid modification.

The protein belongs to the anion exchanger (TC 2.A.31) family. As to expression, expressed in the brain.

Its subcellular location is the cell membrane. It catalyses the reaction hydrogencarbonate(in) + chloride(out) = hydrogencarbonate(out) + chloride(in). Its activity is regulated as follows. Inhibited by 4,4'-diisothiocyanatostilbene-2,2'-disulfonic acid (DIDS). Its function is as follows. Sodium-independent anion exchanger which mediates the electroneutral exchange of chloride for bicarbonate ions across the cell membrane. May be involved in the regulation of intracellular pH, and the modulation of cardiac action potential. The chain is Anion exchange protein 3 (Slc4a3) from Mus musculus (Mouse).